Reading from the N-terminus, the 123-residue chain is MLKEFQKFIMRGNVLDLAVGVIIGSAFTGLVTSLTKNLINPILSMFAGKADLSGLYFTILGAKFTYGNFINDVLNFLIIAFVVFLLVKGINRILPSKPAKPAGPTQEELLTEIRDLLKQDQQV.

The next 2 membrane-spanning stretches (helical) occupy residues 14 to 34 (VLDLAVGVIIGSAFTGLVTSL) and 67 to 87 (GNFINDVLNFLIIAFVVFLLV).

Belongs to the MscL family. As to quaternary structure, homopentamer.

Its subcellular location is the cell membrane. Its function is as follows. Channel that opens in response to stretch forces in the membrane lipid bilayer. May participate in the regulation of osmotic pressure changes within the cell. This Lacticaseibacillus casei (strain BL23) (Lactobacillus casei) protein is Large-conductance mechanosensitive channel.